The following is a 492-amino-acid chain: Probable malate:quinone oxidoreductase 1 (492 aa).

The protein belongs to the MQO family. The cofactor is FAD.

The catalysed reaction is (S)-malate + a quinone = a quinol + oxaloacetate. It functions in the pathway carbohydrate metabolism; tricarboxylic acid cycle; oxaloacetate from (S)-malate (quinone route): step 1/1. The sequence is that of Probable malate:quinone oxidoreductase 1 from Staphylococcus aureus (strain MRSA252).